We begin with the raw amino-acid sequence, 434 residues long: Putative F-box/FBD/LRR-repeat protein At1g16940 (434 aa).

In terms of domain architecture, F-box spans 10 to 66 (HNIINQLPDSLLCEIFFNLPTEEVVKTSLICRRWRYVWQSLPGLDLVINGSKNYDKF). 6 LRR repeats span residues 72-99 (FMFLQRVKLRYVGYGHNCRNMTSMMMNN), 114-141 (RRYVYDRVEIPPTIYTSCERLVFLKLHR), 164-189 (INFVDSLDMEKLVSVCPALETLTMDK), 204-231 (CLTNNETGYLKTQVVMQTPKLKYLKLNR), 252-277 (DVAYFGETLLSILKLISCVRDLTISF), and 306-331 (MAVGSWESLLIFLESCQNLKSLVMGF). The FBD domain maps to 336–385 (WGINFSDVPQCVLSSLEFVEVKAREVADMKKLWSYFMENSTVLKKFTLCL).

This Arabidopsis thaliana (Mouse-ear cress) protein is Putative F-box/FBD/LRR-repeat protein At1g16940.